The following is a 173-amino-acid chain: Alpha-crystallin A chain (173 aa).

At M1 the chain carries N-acetylmethionine. The tract at residues 1 to 63 is required for complex formation with BFSP1 and BFSP2; the sequence is MDIAIQHPWF…RTVLDSGISE (63 aa). A Deamidated glutamine; partial modification is found at Q6. N-linked (Glc) (glycation) lysine glycosylation occurs at K11. S45 bears the Phosphoserine mark. Q50 carries the deamidated glutamine; partial modification. One can recognise a sHSP domain in the interval 52-162; it reads LFRTVLDSGI…GHSERAIPVS (111 aa). K70 carries the N6-acetyllysine modification. K78 is a glycosylation site (N-linked (Glc) (glycation) lysine). Q90 is modified (deamidated glutamine; partial). N6-acetyllysine is present on K99. Zn(2+) is bound at residue H100. N101 carries the post-translational modification Deamidated asparagine; partial. Zn(2+) is bound by residues E102 and H107. At S122 the chain carries Phosphoserine. N123 is modified (deamidated asparagine; partial). The disordered stretch occupies residues 144 to 173; sequence PKIPSGVDAGHSERAIPVSREEKPSSAPSS. Residues 153 to 167 are compositionally biased toward basic and acidic residues; sequence GHSERAIPVSREEKP. Residue H154 coordinates Zn(2+). The interval 157–163 is important for oligomerization; the sequence is RAIPVSR. Residue S162 is glycosylated (O-linked (GlcNAc) serine).

The protein belongs to the small heat shock protein (HSP20) family. In terms of assembly, heteromer composed of three CRYAA and one CRYAB subunits. Inter-subunit bridging via zinc ions enhances stability, which is crucial as there is no protein turn over in the lens. Can also form homodimers and homotetramers (dimers of dimers) which serve as the building blocks of homooligomers. Within homooligomers, the zinc-binding motif is created from residues of 3 different molecules. His-100 and Glu-102 from one molecule are ligands of the zinc ion, and His-107 and His-154 residues from additional molecules complete the site with tetrahedral coordination geometry. Part of a complex required for lens intermediate filament formation composed of BFSP1, BFSP2 and CRYAA. Acetylation at Lys-70 may increase chaperone activity. Post-translationally, undergoes age-dependent proteolytical cleavage at the C-terminus.

The protein resides in the cytoplasm. The protein localises to the nucleus. Its function is as follows. Contributes to the transparency and refractive index of the lens. Acts as a chaperone, preventing aggregation of various proteins under a wide range of stress conditions. Required for the correct formation of lens intermediate filaments as part of a complex composed of BFSP1, BFSP2 and CRYAA. The protein is Alpha-crystallin A chain (CRYAA) of Bos taurus (Bovine).